The chain runs to 385 residues: Palmitoyl-[acyl-carrier-protein] 4-desaturase, chloroplastic (385 aa).

Residues 1–36 constitute a chloroplast transit peptide; sequence MAMKLNALMTLQCPKRNMFTRIAPPQAGRVRSKVSM. Residues E126, E164, H167, E217, E250, and H253 each coordinate Fe cation.

The protein belongs to the fatty acid desaturase type 2 family. Homodimer. Requires Fe(2+) as cofactor. In terms of tissue distribution, found only in tissues which synthesize petroselinic acid, such as developing seeds.

Its subcellular location is the plastid. The protein resides in the chloroplast. The catalysed reaction is hexadecanoyl-[ACP] + 2 reduced [2Fe-2S]-[ferredoxin] + O2 + 2 H(+) = (4Z)-hexadecenoyl-[ACP] + 2 oxidized [2Fe-2S]-[ferredoxin] + 2 H2O. Functionally, converts palmitoyl-ACP to (4Z)-hexadec-4-enoyl-ACP by introduction of a cis double bond between carbons 4 and 5 of the acyl chain. This chain is Palmitoyl-[acyl-carrier-protein] 4-desaturase, chloroplastic, found in Coriandrum sativum (Coriander).